The following is a 504-amino-acid chain: Histidine ammonia-lyase (504 aa).

The segment at residues 141–143 is a cross-link (5-imidazolinone (Ala-Gly)); sequence ASG. Position 142 is a 2,3-didehydroalanine (Ser) (serine 142).

It belongs to the PAL/histidase family. In terms of processing, contains an active site 4-methylidene-imidazol-5-one (MIO), which is formed autocatalytically by cyclization and dehydration of residues Ala-Ser-Gly.

The protein localises to the cytoplasm. The catalysed reaction is L-histidine = trans-urocanate + NH4(+). The protein operates within amino-acid degradation; L-histidine degradation into L-glutamate; N-formimidoyl-L-glutamate from L-histidine: step 1/3. This is Histidine ammonia-lyase from Geobacillus kaustophilus (strain HTA426).